A 395-amino-acid polypeptide reads, in one-letter code: S-adenosylmethionine synthase (395 aa).

Residue His16 coordinates ATP. Asp18 contributes to the Mg(2+) binding site. Glu44 lines the K(+) pocket. The L-methionine site is built by Glu57 and Gln100. Residues 100–110 (QSPDIAQGVDR) are flexible loop. Residues 167 to 169 (DAK), 233 to 234 (RF), Asp242, 248 to 249 (RK), Ala265, and Lys269 each bind ATP. Residue Asp242 participates in L-methionine binding. Lys273 contributes to the L-methionine binding site.

This sequence belongs to the AdoMet synthase family. In terms of assembly, homotetramer; dimer of dimers. Requires Mg(2+) as cofactor. It depends on K(+) as a cofactor.

The protein resides in the cytoplasm. The catalysed reaction is L-methionine + ATP + H2O = S-adenosyl-L-methionine + phosphate + diphosphate. It functions in the pathway amino-acid biosynthesis; S-adenosyl-L-methionine biosynthesis; S-adenosyl-L-methionine from L-methionine: step 1/1. In terms of biological role, catalyzes the formation of S-adenosylmethionine (AdoMet) from methionine and ATP. The overall synthetic reaction is composed of two sequential steps, AdoMet formation and the subsequent tripolyphosphate hydrolysis which occurs prior to release of AdoMet from the enzyme. This Burkholderia lata (strain ATCC 17760 / DSM 23089 / LMG 22485 / NCIMB 9086 / R18194 / 383) protein is S-adenosylmethionine synthase.